Reading from the N-terminus, the 379-residue chain is UDP-N-acetylglucosamine--N-acetylmuramyl-(pentapeptide) pyrophosphoryl-undecaprenol N-acetylglucosamine transferase (379 aa).

Residues 17-19, N128, R169, S197, and Q298 each bind UDP-N-acetyl-alpha-D-glucosamine; that span reads TGG.

Belongs to the glycosyltransferase 28 family. MurG subfamily.

The protein resides in the cell inner membrane. It carries out the reaction di-trans,octa-cis-undecaprenyl diphospho-N-acetyl-alpha-D-muramoyl-L-alanyl-D-glutamyl-meso-2,6-diaminopimeloyl-D-alanyl-D-alanine + UDP-N-acetyl-alpha-D-glucosamine = di-trans,octa-cis-undecaprenyl diphospho-[N-acetyl-alpha-D-glucosaminyl-(1-&gt;4)]-N-acetyl-alpha-D-muramoyl-L-alanyl-D-glutamyl-meso-2,6-diaminopimeloyl-D-alanyl-D-alanine + UDP + H(+). Its pathway is cell wall biogenesis; peptidoglycan biosynthesis. Its function is as follows. Cell wall formation. Catalyzes the transfer of a GlcNAc subunit on undecaprenyl-pyrophosphoryl-MurNAc-pentapeptide (lipid intermediate I) to form undecaprenyl-pyrophosphoryl-MurNAc-(pentapeptide)GlcNAc (lipid intermediate II). In Brucella abortus (strain S19), this protein is UDP-N-acetylglucosamine--N-acetylmuramyl-(pentapeptide) pyrophosphoryl-undecaprenol N-acetylglucosamine transferase.